Consider the following 449-residue polypeptide: 23S rRNA (uracil(1939)-C(5))-methyltransferase RlmD (449 aa).

The TRAM domain occupies 12–70 (SKQLSAKQSFSVHQLDHLGAGIAQHQGKVVFIPGALPNETVQAQLTEQKKNYARAKLIK). Residues Cys83, Cys89, Cys92, and Cys170 each contribute to the [4Fe-4S] cluster site. Residues Gln282, Phe311, Asn316, Glu332, Asp359, and Asp379 each contribute to the S-adenosyl-L-methionine site. Cys405 (nucleophile) is an active-site residue.

The protein belongs to the class I-like SAM-binding methyltransferase superfamily. RNA M5U methyltransferase family. RlmD subfamily.

The enzyme catalyses uridine(1939) in 23S rRNA + S-adenosyl-L-methionine = 5-methyluridine(1939) in 23S rRNA + S-adenosyl-L-homocysteine + H(+). In terms of biological role, catalyzes the formation of 5-methyl-uridine at position 1939 (m5U1939) in 23S rRNA. The chain is 23S rRNA (uracil(1939)-C(5))-methyltransferase RlmD from Shewanella sp. (strain ANA-3).